The chain runs to 269 residues: MTIPTSYLNHTDAEAARKARATYRDGLVAPTSGIAPGFTQANMIVLPRDWAFDFLLYAQRNPKPCPVLDVSDPGSPTTLLAPGADLRTDLPLYRIWRDGKLAEETADATSAWAERDDLVAFLIGCSFTFETPMVEAGIEIRHMTDKSNVPMYLTNRPCRPAGRLKGNMVVSMRPIPASRVADAATISGRFPAVHGAPVHVGAPEQIGISDLSKPDFGDAVRIEPGEVPVFWACGVTPQAAVMASGVPFAITHAPGHMFITDIPDTAYHA.

The protein belongs to the D-glutamate cyclase family.

The protein is Putative hydro-lyase Atu3911 of Agrobacterium fabrum (strain C58 / ATCC 33970) (Agrobacterium tumefaciens (strain C58)).